The primary structure comprises 65 residues: Large ribosomal subunit protein bL35 (65 aa).

The tract at residues 1–47 (MPKIKTNRGAAKRFRKTASGKIKRNSAFTSHILTSKTRKRKRQLRSS) is disordered. Over residues 10–24 (AAKRFRKTASGKIKR) the composition is skewed to basic residues. Residues 26–35 (SAFTSHILTS) are compositionally biased toward polar residues.

It belongs to the bacterial ribosomal protein bL35 family.

The sequence is that of Large ribosomal subunit protein bL35 from Geobacter metallireducens (strain ATCC 53774 / DSM 7210 / GS-15).